We begin with the raw amino-acid sequence, 367 residues long: UDP-N-acetylglucosamine--N-acetylmuramyl-(pentapeptide) pyrophosphoryl-undecaprenol N-acetylglucosamine transferase (367 aa).

UDP-N-acetyl-alpha-D-glucosamine is bound by residues 15–17 (TGG), Asn-127, Arg-163, Ser-191, Ile-249, and Gln-294.

Belongs to the glycosyltransferase 28 family. MurG subfamily.

The protein localises to the cell inner membrane. The catalysed reaction is di-trans,octa-cis-undecaprenyl diphospho-N-acetyl-alpha-D-muramoyl-L-alanyl-D-glutamyl-meso-2,6-diaminopimeloyl-D-alanyl-D-alanine + UDP-N-acetyl-alpha-D-glucosamine = di-trans,octa-cis-undecaprenyl diphospho-[N-acetyl-alpha-D-glucosaminyl-(1-&gt;4)]-N-acetyl-alpha-D-muramoyl-L-alanyl-D-glutamyl-meso-2,6-diaminopimeloyl-D-alanyl-D-alanine + UDP + H(+). It participates in cell wall biogenesis; peptidoglycan biosynthesis. Cell wall formation. Catalyzes the transfer of a GlcNAc subunit on undecaprenyl-pyrophosphoryl-MurNAc-pentapeptide (lipid intermediate I) to form undecaprenyl-pyrophosphoryl-MurNAc-(pentapeptide)GlcNAc (lipid intermediate II). In Burkholderia mallei (strain NCTC 10247), this protein is UDP-N-acetylglucosamine--N-acetylmuramyl-(pentapeptide) pyrophosphoryl-undecaprenol N-acetylglucosamine transferase.